Reading from the N-terminus, the 82-residue chain is Small ribosomal subunit protein bS18 (82 aa).

It belongs to the bacterial ribosomal protein bS18 family. As to quaternary structure, part of the 30S ribosomal subunit. Forms a tight heterodimer with protein bS6.

In terms of biological role, binds as a heterodimer with protein bS6 to the central domain of the 16S rRNA, where it helps stabilize the platform of the 30S subunit. The chain is Small ribosomal subunit protein bS18 from Rhizobium rhizogenes (strain K84 / ATCC BAA-868) (Agrobacterium radiobacter).